Consider the following 450-residue polypeptide: Phosphoglucosamine mutase (450 aa).

Ser-101 (phosphoserine intermediate) is an active-site residue. Ser-101, Asp-240, Asp-242, and Asp-244 together coordinate Mg(2+). Ser-101 bears the Phosphoserine mark.

It belongs to the phosphohexose mutase family. Mg(2+) serves as cofactor. Post-translationally, activated by phosphorylation.

The catalysed reaction is alpha-D-glucosamine 1-phosphate = D-glucosamine 6-phosphate. Catalyzes the conversion of glucosamine-6-phosphate to glucosamine-1-phosphate. This is Phosphoglucosamine mutase from Streptococcus gordonii (strain Challis / ATCC 35105 / BCRC 15272 / CH1 / DL1 / V288).